The sequence spans 811 residues: Mitochondrial intermediate peptidase (811 aa).

A mitochondrion-targeting transit peptide spans 1–25 (MRSGSRLSNYLVRLSGRVSFTQKRS). Residues 423–450 (TENGEKASTDTSTSTTTSTTTTDSTTTT) are disordered. Residues 431–450 (TDTSTSTTTSTTTTDSTTTT) show a composition bias toward low complexity. Histidine 593 is a binding site for Zn(2+). The active site involves glutamate 594. 2 residues coordinate Zn(2+): histidine 597 and histidine 600.

It belongs to the peptidase M3 family. It depends on Zn(2+) as a cofactor.

The protein resides in the mitochondrion matrix. The enzyme catalyses Release of an N-terminal octapeptide as second stage of processing of some proteins imported into the mitochondrion.. Cleaves proteins, imported into the mitochondrion, to their mature size. While most mitochondrial precursor proteins are processed to the mature form in one step by mitochondrial processing peptidase (MPP), the sequential cleavage by MIP of an octapeptide after initial processing by MPP is a required step for a subgroup of nuclear-encoded precursor proteins destined for the matrix or the inner membrane. The chain is Mitochondrial intermediate peptidase (OCT1) from Lodderomyces elongisporus (strain ATCC 11503 / CBS 2605 / JCM 1781 / NBRC 1676 / NRRL YB-4239) (Yeast).